A 185-amino-acid polypeptide reads, in one-letter code: Ribosome-recycling factor (185 aa).

This sequence belongs to the RRF family.

It is found in the cytoplasm. In terms of biological role, responsible for the release of ribosomes from messenger RNA at the termination of protein biosynthesis. May increase the efficiency of translation by recycling ribosomes from one round of translation to another. The polypeptide is Ribosome-recycling factor (Arthrobacter sp. (strain FB24)).